A 256-amino-acid polypeptide reads, in one-letter code: Cytokine-inducible SH2-containing protein (256 aa).

The SH2 domain maps to 81–162; it reads WYWGSITASE…PDVVSLVQHY (82 aa). The tract at residues 168-190 is disordered; sequence ADTRSDSPDPAPTPALPVSKPDA. One can recognise an SOCS box domain in the interval 207-255; the sequence is KLVQPFVRRSSARSLQHLCRLVINRLVTDVDCLPLPRRMADYLRQYPFQ.

Stably associated with the tyrosine-phosphorylated IL3 receptor beta chain and tyrosine-phosphorylated EPO receptor (EPOR).

It participates in protein modification; protein ubiquitination. SOCS family proteins form part of a classical negative feedback system that regulates cytokine signal transduction. CIS is involved in the negative regulation of cytokines that signal through the JAK-STAT5 pathway such as erythropoietin, prolactin and interleukin 3 (IL3) receptor. Inhibits STAT5 trans-activation by suppressing its tyrosine phosphorylation. May be a substrate recognition component of a SCF-like ECS (Elongin BC-CUL2/5-SOCS-box protein) E3 ubiquitin-protein ligase complex which mediates the ubiquitination and subsequent proteasomal degradation of target proteins. This chain is Cytokine-inducible SH2-containing protein (Cish), found in Rattus norvegicus (Rat).